Here is a 634-residue protein sequence, read N- to C-terminus: Chaperone protein HtpG (634 aa).

Positions 1 to 344 (MNETVANNKE…SNDLPLNVSR (344 aa)) are a; substrate-binding. Positions 345-561 (EILQDNKVTQ…DFEMGTQMAK (217 aa)) are b. The tract at residues 562–634 (LLAAAGQAVP…TAINSLLTKG (73 aa)) is c.

The protein belongs to the heat shock protein 90 family. As to quaternary structure, homodimer.

It is found in the cytoplasm. Its function is as follows. Molecular chaperone. Has ATPase activity. This Vibrio vulnificus (strain CMCP6) protein is Chaperone protein HtpG.